We begin with the raw amino-acid sequence, 497 residues long: B3 domain-containing protein REM1 (497 aa).

DNA-binding regions (TF-B3) lie at residues 7–92, 142–239, and 278–379; these read PSLF…SSES, FLRA…LCSH, and FLTQ…HSKI. Residues 87–135 form a disordered region; it reads AVSSESDDDESDDTDDSESDDESNDTDDSESDDSEDNGEGDSSLVNKEA. Over residues 91–125 the composition is skewed to acidic residues; it reads ESDDDESDDTDDSESDDESNDTDDSESDDSEDNGE.

Specifically expressed in the reproductive meristem.

The protein resides in the nucleus. May play a role in flower development. The polypeptide is B3 domain-containing protein REM1 (REM1) (Brassica oleracea var. botrytis (Cauliflower)).